Here is a 150-residue protein sequence, read N- to C-terminus: Large ribosomal subunit protein bL9 (150 aa).

It belongs to the bacterial ribosomal protein bL9 family.

Its function is as follows. Binds to the 23S rRNA. This is Large ribosomal subunit protein bL9 from Corynebacterium aurimucosum (strain ATCC 700975 / DSM 44827 / CIP 107346 / CN-1) (Corynebacterium nigricans).